Consider the following 76-residue polypeptide: Alpha/kappa-conotoxin pl14a (76 aa).

The N-terminal stretch at 1 to 24 is a signal peptide; that stretch reads MPSVRSVTCCCLLWMMFSVQLVTP. A propeptide spanning residues 25–39 is cleaved from the precursor; that stretch reads GSPGTAQLSGHRTAR. 2 disulfides stabilise this stretch: Cys-46-Cys-61 and Cys-50-Cys-63. An Arginine amide modification is found at Arg-64. Positions 65-76 are excised as a propeptide; it reads GKRDAVSSSMAV.

Belongs to the conotoxin J superfamily. As to expression, expressed by the venom duct.

It localises to the secreted. Its function is as follows. Highly inhibits both nicotinic acetylcholine receptors (neuronal (IC(50)=8.7 uM for alpha-3/beta-4) and muscular (IC(50)=0.54 uM for alpha-1-beta-1-epsilon-delta (CHRNA1-CHRNB1-CHRND-CHRNE)) subtypes) and the voltage-gated potassium channel Kv1.6/KCNA6 subtype (IC(50)=1.59 uM). The sequence is that of Alpha/kappa-conotoxin pl14a from Conus planorbis (Planorbis cone).